A 95-amino-acid polypeptide reads, in one-letter code: Secretoglobin family 2A member 2 (95 aa).

Residues 1-18 (MKLVFLFLLVTIPICCYA) form the signal peptide. N-linked (GlcNAc...) asparagine glycosylation occurs at N35.

It belongs to the secretoglobin family. Lipophilin subfamily. Prostatein is composed of three different peptides called C1, C2 and C3. These form covalent C1:C3 (F) and C2:C3 (S) heterodimers whose non-covalent association forms tetrameric (C1:C3/C3:C2) prostatein molecules. Highly expressed in ventral prostate.

It localises to the secreted. Part of prostatein which is the major secretory glycoprotein of ventral prostate gland. Steroid-binding protein; can bind non-polar steroids, cholesterol and a group of small proline-rich peptides. This Rattus norvegicus (Rat) protein is Secretoglobin family 2A member 2 (Scgb2a2).